The primary structure comprises 40 residues: Sulfur globule protein TR2 (40 aa).

The protein to C.vinosum CV3. In terms of assembly, the protein envelope of the sulfur globules is composed of the three different proteins TR0, TR1 and TR2.

Structural protein of the sulfur globules, which are intracellular globules that serve for sulfur storage in purple sulfur bacteria. The chain is Sulfur globule protein TR2 from Thiocapsa roseopersicina.